Here is a 521-residue protein sequence, read N- to C-terminus: FAD-dependent monooxygenase DEP2 (521 aa).

A signal peptide spans 1 to 22 (MHDSPPFKVIIVGAGVTGLTLA). Positions 36 and 109 each coordinate FAD. Residues Asn139 and Asn220 are each glycosylated (N-linked (GlcNAc...) asparagine). The FAD site is built by Asp310 and Gly323. A helical membrane pass occupies residues 477–497 (ILVLWAGLWLAICFFHLVFSG). The N-linked (GlcNAc...) asparagine glycan is linked to Asn515.

It belongs to the paxM FAD-dependent monooxygenase family. FAD is required as a cofactor.

Its subcellular location is the membrane. The protein operates within polyketide biosynthesis. In terms of biological role, part of the gene cluster that mediates the biosynthesis of depudecin, a highly oxidized eleven-carbon linear polyketide that acts as a histone deacetylase (HDAC) inhibitor and makes a small contribution to pathogenesis. The reducing polyketide synthase DEP5 is the central enzyme in depudecin biosynthesis by yielding the backbone polyketide chain. The monooxygenases DEP2 and DEP4, as well as the uncharacterized protein DEP1, then act as tailoring enzymes to modify the intermediate polyketide chain into depudecin. The protein is FAD-dependent monooxygenase DEP2 of Fusarium langsethiae.